Consider the following 269-residue polypeptide: MARASSGNGSEEAWGALRAPQQQLRELCPGVNNQPYLCESGHCCGETGCCTYYYELWWFWLLWTVLILFSCCCAFRHRRAKLRLQQQQRQREINLLAYHGACHGAGPFPTGSLLDLRFLSTFKPPAYEDVVHRPGTPPPPYTVAPGRPLTASSEQTCCSSSSSCPAHFEGTNVEGVSSHQSAPPHQEGEPGAGVTPASTPPSCRYRRLTGDSGIELCPCPASGEGEPVKEVRVSATLPDLEDYSPCALPPESVPQIFPMGLSSSEGDIP.

2 consecutive short sequence motifs (PPxY motif) follow at residues 124–127 (PPAY) and 137–141 (PPPPY). Disordered regions lie at residues 169–203 (EGTN…PPSC) and 249–269 (PPES…GDIP). The span at 174–183 (EGVSSHQSAP) shows a compositional bias: polar residues.

As to quaternary structure, interacts with NEDD4. Binds to the WW domain of YAP1, WWP1 and WWP2. Interacts with WWOX. Expressed in most tissues but at significantly lower levels in placenta, lung, liver, and kidney.

This is WW domain-binding protein 1 (WBP1) from Homo sapiens (Human).